A 274-amino-acid polypeptide reads, in one-letter code: 2,3,4,5-tetrahydropyridine-2,6-dicarboxylate N-succinyltransferase (274 aa).

Residues arginine 104 and aspartate 141 each coordinate substrate.

The protein belongs to the transferase hexapeptide repeat family. In terms of assembly, homotrimer.

The protein localises to the cytoplasm. The catalysed reaction is (S)-2,3,4,5-tetrahydrodipicolinate + succinyl-CoA + H2O = (S)-2-succinylamino-6-oxoheptanedioate + CoA. It functions in the pathway amino-acid biosynthesis; L-lysine biosynthesis via DAP pathway; LL-2,6-diaminopimelate from (S)-tetrahydrodipicolinate (succinylase route): step 1/3. This chain is 2,3,4,5-tetrahydropyridine-2,6-dicarboxylate N-succinyltransferase, found in Photorhabdus laumondii subsp. laumondii (strain DSM 15139 / CIP 105565 / TT01) (Photorhabdus luminescens subsp. laumondii).